We begin with the raw amino-acid sequence, 375 residues long: GDSL esterase/lipase At5g45960 (375 aa).

The signal sequence occupies residues 1 to 28; that stretch reads MRSHHRHFSSYVSFILFLFLFFISFSSS. Ser-54 functions as the Nucleophile in the catalytic mechanism. Asn-340 is a glycosylation site (N-linked (GlcNAc...) asparagine). Active-site residues include Asp-348 and His-351.

It belongs to the 'GDSL' lipolytic enzyme family.

Its subcellular location is the secreted. In Arabidopsis thaliana (Mouse-ear cress), this protein is GDSL esterase/lipase At5g45960.